A 267-amino-acid chain; its full sequence is Luciferase (267 aa).

A glycan (N-linked (GlcNAc...) asparagine) is linked at Asn4. Residues 17-39 (LSSRSIAITCGVVLASAIAFPII) form a helical membrane-spanning segment.

The protein belongs to the fungal luciferase family.

Its subcellular location is the membrane. The catalysed reaction is 3-hydroxyhispidin + O2 = (E)-caffeoylpyruvate + hnu + CO2. The enzyme catalyses 3-hydroxyhispidin + O2 = 4-[(E)-2-(3,4-dihydroxyphenyl)ethenyl]-1,7-dihydroxy-2,3,5-trioxabicyclo[2.2.2]oct-7-en-6-one. Functionally, luciferase; part of the gene cluster that mediates the fungal bioluminescence cycle. Uses the fungal luciferin 3-hydroxyhispidin as a substrate to produce an endoperoxide as a high-energy intermediate with decomposition that yields oxyluciferin (also known as caffeoylpyruvate) and light emission. The fungal bioluminescence cycle begins with the hispidin synthetase that catalyzes the formation of hispidin which is further hydroxylated by the hispidin-3-hydroxylase, yielding the fungal luciferin 3-hydroxyhispidin. The luciferase then produces an endoperoxide as a high-energy intermediate with decomposition that yields oxyluciferin and light emission. Oxyluciferin can be recycled to caffeic acid by caffeoylpyruvate hydrolase. This Neonothopanus nambi (Agaricus nambi) protein is Luciferase.